Consider the following 157-residue polypeptide: MKPKTLSPILTAKGVRLAIAVGRFNERVTKLLLEGALEAYARLGGDPAEVLVAWVPGSFELPLVAKRLAQRPDVDAVVALGAVIRGETPHFEYVAGQAASGLMQAMLQTEKPIVFGVLTTNTPEEAQERAGGKAGNKGAEAVFTAIEMVRLLEAISR.

5-amino-6-(D-ribitylamino)uracil contacts are provided by residues Phe-24, 58-60, and 82-84; these read SFE and AVI. Position 87-88 (87-88) interacts with (2S)-2-hydroxy-3-oxobutyl phosphate; it reads ET. His-90 (proton donor) is an active-site residue. Phe-115 contacts 5-amino-6-(D-ribitylamino)uracil. Arg-129 is a (2S)-2-hydroxy-3-oxobutyl phosphate binding site.

It belongs to the DMRL synthase family.

It carries out the reaction (2S)-2-hydroxy-3-oxobutyl phosphate + 5-amino-6-(D-ribitylamino)uracil = 6,7-dimethyl-8-(1-D-ribityl)lumazine + phosphate + 2 H2O + H(+). It participates in cofactor biosynthesis; riboflavin biosynthesis; riboflavin from 2-hydroxy-3-oxobutyl phosphate and 5-amino-6-(D-ribitylamino)uracil: step 1/2. Catalyzes the formation of 6,7-dimethyl-8-ribityllumazine by condensation of 5-amino-6-(D-ribitylamino)uracil with 3,4-dihydroxy-2-butanone 4-phosphate. This is the penultimate step in the biosynthesis of riboflavin. This chain is 6,7-dimethyl-8-ribityllumazine synthase, found in Thermus thermophilus (strain ATCC BAA-163 / DSM 7039 / HB27).